We begin with the raw amino-acid sequence, 272 residues long: Shikimate dehydrogenase (NADP(+)) (272 aa).

Residues Ser-14–Ser-16 and Thr-61 contribute to the shikimate site. The active-site Proton acceptor is the Lys-65. An NADP(+)-binding site is contributed by Glu-77. Residues Asn-86 and Asp-102 each contribute to the shikimate site. Residues Gly-126–Ala-130, Asn-149–Arg-154, and Met-213 contribute to the NADP(+) site. Position 215 (Tyr-215) interacts with shikimate. Gly-237 lines the NADP(+) pocket.

It belongs to the shikimate dehydrogenase family. In terms of assembly, homodimer.

It carries out the reaction shikimate + NADP(+) = 3-dehydroshikimate + NADPH + H(+). Its pathway is metabolic intermediate biosynthesis; chorismate biosynthesis; chorismate from D-erythrose 4-phosphate and phosphoenolpyruvate: step 4/7. Functionally, involved in the biosynthesis of the chorismate, which leads to the biosynthesis of aromatic amino acids. Catalyzes the reversible NADPH linked reduction of 3-dehydroshikimate (DHSA) to yield shikimate (SA). In Salmonella typhimurium (strain LT2 / SGSC1412 / ATCC 700720), this protein is Shikimate dehydrogenase (NADP(+)).